A 185-amino-acid polypeptide reads, in one-letter code: CASP-like protein SELMODRAFT_413556 (185 aa).

Topologically, residues 1–89 (MATLPLSLIF…AVTVLFYLAK (89 aa)) are cytoplasmic. Residues 90–110 (LVFGILGLALSIIWLLHIIVF) form a helical membrane-spanning segment. Over 111–131 (MLVNPPAFPFLNQVFIQLDSA) the chain is Extracellular. A helical membrane pass occupies residues 132 to 152 (WGLLGTTAFAIFCYYLIMSVI). Residues 153–163 (SGEMHSIHPMK) lie on the Cytoplasmic side of the membrane. Residues 164 to 184 (YQGTLMNSFLFNVAIILLCST) traverse the membrane as a helical segment. A topological domain (extracellular) is located at residue arginine 185.

Belongs to the Casparian strip membrane proteins (CASP) family. In terms of assembly, homodimer and heterodimers.

The protein resides in the cell membrane. The sequence is that of CASP-like protein SELMODRAFT_413556 from Selaginella moellendorffii (Spikemoss).